Reading from the N-terminus, the 196-residue chain is GTP cyclohydrolase 1 (196 aa).

Zn(2+) contacts are provided by C86, H89, and C158.

The protein belongs to the GTP cyclohydrolase I family. Toroid-shaped homodecamer, composed of two pentamers of five dimers.

It carries out the reaction GTP + H2O = 7,8-dihydroneopterin 3'-triphosphate + formate + H(+). It participates in cofactor biosynthesis; 7,8-dihydroneopterin triphosphate biosynthesis; 7,8-dihydroneopterin triphosphate from GTP: step 1/1. This chain is GTP cyclohydrolase 1, found in Clostridium botulinum (strain ATCC 19397 / Type A).